Here is a 147-residue protein sequence, read N- to C-terminus: Catabolic 3-dehydroquinase 2 (147 aa).

Tyrosine 23 functions as the Proton acceptor in the catalytic mechanism. Residues asparagine 74, histidine 80, and aspartate 87 each contribute to the substrate site. Histidine 100 (proton donor) is an active-site residue. Residues 101–102 and arginine 111 contribute to the substrate site; that span reads IT.

This sequence belongs to the type-II 3-dehydroquinase family. In terms of assembly, homododecamer. Adopts a ring-like structure, composed of an arrangement of two hexameric rings stacked on top of one another.

It catalyses the reaction 3-dehydroquinate = 3-dehydroshikimate + H2O. It functions in the pathway aromatic compound metabolism; 3,4-dihydroxybenzoate biosynthesis; 3,4-dihydroxybenzoate from 3-dehydroquinate: step 1/2. Functionally, is involved in the catabolism of quinate. Allows the utilization of quinate as carbon source via the beta-ketoadipate pathway. The chain is Catabolic 3-dehydroquinase 2 from Aspergillus terreus (strain NIH 2624 / FGSC A1156).